The chain runs to 138 residues: Fluoride-specific ion channel FluC (138 aa).

Helical transmembrane passes span 34-54 (FMPK…GACA), 60-80 (MQFG…SFLM), 88-108 (FWGT…VVLV), and 112-132 (LPHA…AWLM). Residues glycine 95 and threonine 98 each contribute to the Na(+) site.

The protein belongs to the fluoride channel Fluc/FEX (TC 1.A.43) family.

The protein resides in the cell membrane. The enzyme catalyses fluoride(in) = fluoride(out). With respect to regulation, na(+) is not transported, but it plays an essential structural role and its presence is essential for fluoride channel function. In terms of biological role, fluoride-specific ion channel. Important for reducing fluoride concentration in the cell, thus reducing its toxicity. This chain is Fluoride-specific ion channel FluC, found in Corynebacterium efficiens (strain DSM 44549 / YS-314 / AJ 12310 / JCM 11189 / NBRC 100395).